A 312-amino-acid polypeptide reads, in one-letter code: 1-phosphofructokinase (312 aa).

Residues 223–228 (SLGAEG) and 254–255 (GD) contribute to the ATP site. The active-site Proton acceptor is the D255.

Belongs to the carbohydrate kinase PfkB family.

It catalyses the reaction beta-D-fructose 1-phosphate + ATP = beta-D-fructose 1,6-bisphosphate + ADP + H(+). Its function is as follows. Catalyzes the ATP-dependent phosphorylation of fructose-l-phosphate to fructose-l,6-bisphosphate. The chain is 1-phosphofructokinase (fruK) from Escherichia coli O157:H7.